The chain runs to 108 residues: Sperm-egg fusion protein LLCFC1 (108 aa).

The first 30 residues, 1-30 (MTSLGSQLHRATFLTALLLLLLLQVKGVKT), serve as a signal peptide directing secretion. Basic and acidic residues predominate over residues 39–49 (GDKSQKDKVSS). The interval 39–64 (GDKSQKDKVSSEDQGEEEYEEHFEAS) is disordered.

Detected in testicular germ cells and spermatozoa (at protein level). Abundantly expressed in testis.

It localises to the secreted. Functionally, sperm protein required for fusion of sperm with the egg membrane during fertilization. The polypeptide is Sperm-egg fusion protein LLCFC1 (Mus musculus (Mouse)).